The sequence spans 357 residues: 3-isopropylmalate dehydrogenase (357 aa).

76–89 (GYQWESLDISVRPE) serves as a coordination point for NAD(+). Substrate contacts are provided by Arg96, Arg106, Arg134, and Asp224. Mg(2+) is bound by residues Asp224, Asp248, and Asp252. 282 to 294 (GSAPDIAGQNIAN) provides a ligand contact to NAD(+).

The protein belongs to the isocitrate and isopropylmalate dehydrogenases family. LeuB type 1 subfamily. In terms of assembly, homodimer. It depends on Mg(2+) as a cofactor. Mn(2+) serves as cofactor.

It is found in the cytoplasm. It carries out the reaction (2R,3S)-3-isopropylmalate + NAD(+) = 4-methyl-2-oxopentanoate + CO2 + NADH. It functions in the pathway amino-acid biosynthesis; L-leucine biosynthesis; L-leucine from 3-methyl-2-oxobutanoate: step 3/4. Catalyzes the oxidation of 3-carboxy-2-hydroxy-4-methylpentanoate (3-isopropylmalate) to 3-carboxy-4-methyl-2-oxopentanoate. The product decarboxylates to 4-methyl-2 oxopentanoate. The protein is 3-isopropylmalate dehydrogenase of Hydrogenovibrio crunogenus (strain DSM 25203 / XCL-2) (Thiomicrospira crunogena).